The sequence spans 274 residues: Bis(5'-nucleosyl)-tetraphosphatase, symmetrical (274 aa).

The protein belongs to the Ap4A hydrolase family.

The enzyme catalyses P(1),P(4)-bis(5'-adenosyl) tetraphosphate + H2O = 2 ADP + 2 H(+). In terms of biological role, hydrolyzes diadenosine 5',5'''-P1,P4-tetraphosphate to yield ADP. The sequence is that of Bis(5'-nucleosyl)-tetraphosphatase, symmetrical from Buchnera aphidicola subsp. Acyrthosiphon pisum (strain Tuc7).